The chain runs to 389 residues: Na(+)/H(+) antiporter NhaA 1 (389 aa).

A run of 12 helical transmembrane segments spans residues 12-32 (VLNE…ALLV), 62-82 (FLLW…GLEL), 97-117 (IVLP…LFVL), 128-148 (GWAI…MMCG), 157-177 (IFLL…IAIF), 184-204 (IVAF…NILG), 220-240 (ISVL…AFFI), 260-280 (FWLA…VNLS), 282-302 (IDIG…LFVG), 305-325 (AGVF…LPQG), 331-351 (LYGV…IDGL), and 365-385 (LAIL…LKFF).

This sequence belongs to the NhaA Na(+)/H(+) (TC 2.A.33) antiporter family.

The protein resides in the cell inner membrane. It carries out the reaction Na(+)(in) + 2 H(+)(out) = Na(+)(out) + 2 H(+)(in). Functionally, na(+)/H(+) antiporter that extrudes sodium in exchange for external protons. This chain is Na(+)/H(+) antiporter NhaA 1, found in Campylobacter jejuni subsp. jejuni serotype O:23/36 (strain 81-176).